The sequence spans 400 residues: Acyl-CoA dehydrogenase FadE26 (400 aa).

Residues 127 to 130 (IGYS), threonine 136, and serine 162 contribute to the FAD site. The Proton acceptor role is filled by glutamate 247. Position 380–382 (380–382 (TNE)) interacts with FAD.

It belongs to the acyl-CoA dehydrogenase family. As to quaternary structure, heterotetramer (dimer of heterodimers) composed of FadE26 and FadE27. FAD is required as a cofactor.

It carries out the reaction (25S)-3-oxocholest-4-en-26-oyl-CoA + A = 3-oxo-cholest-4,24-dien-26-oyl-CoA + AH2. The protein operates within steroid metabolism; cholesterol degradation. With respect to regulation, uncompetitively inhibited by high concentration of 3-OCS-CoA. Its function is as follows. Involved in the first cycle of side chain dehydrogenation in the beta-oxidation of cholesterol catabolism. It contributes partly to the virulence by increasing the efficiency of beta-oxidation. Catalyzes the dehydrogenation of acyl-CoA ester side chains of (25S)-3-oxo-cholest-4-en-26-oyl-CoA (3-OCS-CoA) to yield (24E)-3-oxo-cholest-4,24-dien-26-oyl-CoA. Also able to dehydrogenate steroyl-CoA such as 3-oxo-chol-4-en-24-oyl-CoA (3-OCO-CoA) as well as 3-oxo-4-pregnene-20-carboxyl-CoA (3-OPC-CoA). It dehydrogenates only (25S)-OCS-CoA diastereomer. The sequence is that of Acyl-CoA dehydrogenase FadE26 (fadE26) from Mycobacterium tuberculosis (strain ATCC 25618 / H37Rv).